We begin with the raw amino-acid sequence, 647 residues long: Threonine--tRNA ligase (647 aa).

One can recognise a TGS domain in the interval 1-61 (MINITFPDGA…TEDGSIEIVT (61 aa)). Residues 242 to 540 (DHRKLGKELD…LIENYKGAFP (299 aa)) are catalytic. Zn(2+)-binding residues include C336, H387, and H517.

This sequence belongs to the class-II aminoacyl-tRNA synthetase family. In terms of assembly, homodimer. Zn(2+) serves as cofactor.

The protein localises to the cytoplasm. It carries out the reaction tRNA(Thr) + L-threonine + ATP = L-threonyl-tRNA(Thr) + AMP + diphosphate + H(+). Catalyzes the attachment of threonine to tRNA(Thr) in a two-step reaction: L-threonine is first activated by ATP to form Thr-AMP and then transferred to the acceptor end of tRNA(Thr). Also edits incorrectly charged L-seryl-tRNA(Thr). This is Threonine--tRNA ligase from Streptococcus pneumoniae serotype 4 (strain ATCC BAA-334 / TIGR4).